Here is a 248-residue protein sequence, read N- to C-terminus: MKLAVDTHTHTYASGHAYSTLIENARAAKQNGLTLFCTTDHAESMPGAPHYWFFSNQRILPRFLEGVGVIRGVEANILNTQGEIDLHSSVDHNLDWVIGSFHEPVFHPADKAAHTQALIETIKGGRVDALGHLGNPHFDFDFEQVIACAKTHNVAIEINNSTLKGHSRVGSIDRCYEIARVAKSLDAYITTGSDAHFCLDIGGLSLASQLIDEVGINPQRVITHTARQFLDFLELRGRQPIEEFAGLL.

Zn(2+) contacts are provided by H8, H10, H16, H41, E74, H102, H132, D194, and H196.

This sequence belongs to the PHP family. Requires Zn(2+) as cofactor.

The protein is Probable phosphatase VCM66_A0854 of Vibrio cholerae serotype O1 (strain M66-2).